The chain runs to 687 residues: Fatty acid oxidation complex subunit alpha (687 aa).

Residues 1 to 191 are enoyl-CoA hydratase; sequence MKNTSAFAWT…KLGVVDASVP (191 aa). The interval 307–687 is 3-hydroxyacyl-CoA dehydrogenase; that stretch reads KSIDYVGVLG…ADKYGDRFIE (381 aa).

In the N-terminal section; belongs to the enoyl-CoA hydratase/isomerase family. This sequence in the central section; belongs to the 3-hydroxyacyl-CoA dehydrogenase family. Heterotetramer of two alpha chains (FadJ) and two beta chains (FadI).

It localises to the cytoplasm. It catalyses the reaction a (3S)-3-hydroxyacyl-CoA = a (2E)-enoyl-CoA + H2O. The enzyme catalyses a 4-saturated-(3S)-3-hydroxyacyl-CoA = a (3E)-enoyl-CoA + H2O. It carries out the reaction a (3S)-3-hydroxyacyl-CoA + NAD(+) = a 3-oxoacyl-CoA + NADH + H(+). The catalysed reaction is (3S)-3-hydroxybutanoyl-CoA = (3R)-3-hydroxybutanoyl-CoA. Its pathway is lipid metabolism; fatty acid beta-oxidation. Catalyzes the formation of a hydroxyacyl-CoA by addition of water on enoyl-CoA. Also exhibits 3-hydroxyacyl-CoA epimerase and 3-hydroxyacyl-CoA dehydrogenase activities. The polypeptide is Fatty acid oxidation complex subunit alpha (Aliivibrio fischeri (strain ATCC 700601 / ES114) (Vibrio fischeri)).